The chain runs to 1464 residues: Gag-Pol polyprotein (1464 aa).

Gly-2 carries the N-myristoyl glycine; by host lipid modification. The interval 7-31 (VLSGKKTDELEKVRLRPGGKKRYML) is interaction with Gp41. Residues 16 to 22 (LEKVRLR) carry the Nuclear export signal motif. The short motif at 26 to 32 (KKRYMLK) is the Nuclear localization signal element. Tyr-130 bears the Phosphotyrosine; by host mark. The tract at residues 186-223 (NCVGEHQAAMQIIREIINEEAADWDQQHPSPGPMPAGQ) is interaction with human PPIA/CYPA and NUP153. The tract at residues 274-360 (YNPTNILDIK…GGPGQKARLM (87 aa)) is dimerization/Multimerization of capsid protein p24. CCHC-type zinc fingers lie at residues 387–404 (VTCW…QCKA) and 408–425 (QGCW…KCPE). The span at 483-499 (AKELHATREEAEGEQRE) shows a compositional bias: basic and acidic residues. Residues 483 to 504 (AKELHATREEAEGEQRETLQGG) are disordered. Positions 511 to 515 (PQFSL) are dimerization of protease. In terms of domain architecture, Peptidase A2 spans 531–600 (EVLLDTGADD…PINIFGRNIL (70 aa)). Asp-535 serves as the catalytic For protease activity; shared with dimeric partner. Dimerization of protease regions lie at residues 559 to 565 (GIGGFIN) and 598 to 610 (NILN…LNFP). The 191-residue stretch at 654–844 (GQLEEAPPTN…PFKWMGYELW (191 aa)) folds into the Reverse transcriptase domain. 3 residues coordinate Mg(2+): Asp-719, Asp-794, and Asp-795. The tract at residues 836 to 844 (FKWMGYELW) is RT 'primer grip'. A Tryptophan repeat motif motif is present at residues 1006 to 1022 (WDQWWTDYWQVTWIPEW). Positions 1042 to 1165 (LEGVETYYTD…VDHLVSQGIR (124 aa)) constitute an RNase H type-1 domain. Residues Asp-1051, Glu-1086, Asp-1106, and Asp-1157 each contribute to the Mg(2+) site. The Integrase-type zinc finger occupies 1171–1212 (EKIEPAQEEHEKYHNNVKELVHKFGIPQLVARQIVNSCDKCQ). The Zn(2+) site is built by His-1180, His-1184, Cys-1208, and Cys-1211. The Integrase catalytic domain occupies 1222–1373 (VNSELGTWQM…PAERIVNMIT (152 aa)). 3 residues coordinate Mg(2+): Asp-1232, Asp-1284, and Glu-1320. The integrase-type DNA-binding region spans 1391-1438 (FRVYYREGRDQLWKGPGDLLWKGEGAVIIKVGTEIKVIPRRKAKIIRN).

As to quaternary structure, homotrimer; further assembles as hexamers of trimers. Interacts with gp41 (via C-terminus). Interacts with host CALM1; this interaction induces a conformational change in the Matrix protein, triggering exposure of the myristate group. Interacts with host AP3D1; this interaction allows the polyprotein trafficking to multivesicular bodies during virus assembly. Part of the pre-integration complex (PIC) which is composed of viral genome, matrix protein, Vpr and integrase. Homodimer; the homodimer further multimerizes as homohexamers or homopentamers. Interacts with human PPIA/CYPA. Interacts with human NUP153. Interacts with host PDZD8; this interaction stabilizes the capsid. Interacts with monkey TRIM5; this interaction destabilizes the capsid. In terms of assembly, homodimer, whose active site consists of two apposed aspartic acid residues. As to quaternary structure, heterodimer of p66 RT and p51 RT (RT p66/p51). Heterodimerization of RT is essential for DNA polymerase activity. The overall folding of the subdomains is similar in p66 RT and p51 RT but the spatial arrangements of the subdomains are dramatically different. Homotetramer; may further associate as a homohexadecamer. Part of the pre-integration complex (PIC) which is composed of viral genome, matrix protein, Vpr and integrase. Interacts with human SMARCB1/INI1 and human PSIP1/LEDGF isoform 1. Interacts with human KPNA3; this interaction might play a role in nuclear import of the pre-integration complex. Interacts with human NUP153; this interaction might play a role in nuclear import of the pre-integration complex. It depends on Mg(2+) as a cofactor. Post-translationally, specific enzymatic cleavages by the viral protease yield mature proteins. The protease is released by autocatalytic cleavage. The polyprotein is cleaved during and after budding, this process is termed maturation. Proteolytic cleavage of p66 RT removes the RNase H domain to yield the p51 RT subunit. Nucleocapsid protein p7 might be further cleaved after virus entry.

It is found in the host cell membrane. The protein localises to the host endosome. Its subcellular location is the host multivesicular body. It localises to the virion membrane. The protein resides in the host nucleus. It is found in the host cytoplasm. The protein localises to the virion. It catalyses the reaction Endopeptidase for which the P1 residue is preferably hydrophobic.. The catalysed reaction is Endohydrolysis of RNA in RNA/DNA hybrids. Three different cleavage modes: 1. sequence-specific internal cleavage of RNA. Human immunodeficiency virus type 1 and Moloney murine leukemia virus enzymes prefer to cleave the RNA strand one nucleotide away from the RNA-DNA junction. 2. RNA 5'-end directed cleavage 13-19 nucleotides from the RNA end. 3. DNA 3'-end directed cleavage 15-20 nucleotides away from the primer terminus.. The enzyme catalyses 3'-end directed exonucleolytic cleavage of viral RNA-DNA hybrid.. It carries out the reaction DNA(n) + a 2'-deoxyribonucleoside 5'-triphosphate = DNA(n+1) + diphosphate. With respect to regulation, protease: The viral protease is inhibited by many synthetic protease inhibitors (PIs), such as amprenavir, atazanavir, indinavir, loprinavir, nelfinavir, ritonavir and saquinavir. Use of protease inhibitors in tritherapy regimens permit more ambitious therapeutic strategies. Reverse transcriptase/ribonuclease H: RT can be inhibited either by nucleoside RT inhibitors (NRTIs) or by non nucleoside RT inhibitors (NNRTIs). NRTIs act as chain terminators, whereas NNRTIs inhibit DNA polymerization by binding a small hydrophobic pocket near the RT active site and inducing an allosteric change in this region. Classical NRTIs are abacavir, adefovir (PMEA), didanosine (ddI), lamivudine (3TC), stavudine (d4T), tenofovir (PMPA), zalcitabine (ddC), and zidovudine (AZT). Classical NNRTIs are atevirdine (BHAP U-87201E), delavirdine, efavirenz (DMP-266), emivirine (I-EBU), and nevirapine (BI-RG-587). The tritherapies used as a basic effective treatment of AIDS associate two NRTIs and one NNRTI. In terms of biological role, mediates, with Gag polyprotein, the essential events in virion assembly, including binding the plasma membrane, making the protein-protein interactions necessary to create spherical particles, recruiting the viral Env proteins, and packaging the genomic RNA via direct interactions with the RNA packaging sequence (Psi). Gag-Pol polyprotein may regulate its own translation, by the binding genomic RNA in the 5'-UTR. At low concentration, the polyprotein would promote translation, whereas at high concentration, the polyprotein would encapsidate genomic RNA and then shut off translation. Targets the polyprotein to the plasma membrane via a multipartite membrane-binding signal, that includes its myristoylated N-terminus. Matrix protein is part of the pre-integration complex. Implicated in the release from host cell mediated by Vpu. Binds to RNA. Functionally, forms the conical core that encapsulates the genomic RNA-nucleocapsid complex in the virion. Most core are conical, with only 7% tubular. The core is constituted by capsid protein hexamer subunits. The core is disassembled soon after virion entry. Host restriction factors such as TRIM5-alpha or TRIMCyp bind retroviral capsids and cause premature capsid disassembly, leading to blocks in reverse transcription. Capsid restriction by TRIM5 is one of the factors which restricts HIV-1 to the human species. Host PIN1 apparently facilitates the virion uncoating. On the other hand, interactions with PDZD8 or CYPA stabilize the capsid. Its function is as follows. Encapsulates and protects viral dimeric unspliced genomic RNA (gRNA). Binds these RNAs through its zinc fingers. Acts as a nucleic acid chaperone which is involved in rearangement of nucleic acid secondary structure during gRNA retrotranscription. Also facilitates template switch leading to recombination. As part of the polyprotein, participates in gRNA dimerization, packaging, tRNA incorporation and virion assembly. In terms of biological role, aspartyl protease that mediates proteolytic cleavages of Gag and Gag-Pol polyproteins during or shortly after the release of the virion from the plasma membrane. Cleavages take place as an ordered, step-wise cascade to yield mature proteins. This process is called maturation. Displays maximal activity during the budding process just prior to particle release from the cell. Also cleaves Nef and Vif, probably concomitantly with viral structural proteins on maturation of virus particles. Hydrolyzes host EIF4GI and PABP1 in order to shut off the capped cellular mRNA translation. The resulting inhibition of cellular protein synthesis serves to ensure maximal viral gene expression and to evade host immune response. Multifunctional enzyme that converts the viral RNA genome into dsDNA in the cytoplasm, shortly after virus entry into the cell. This enzyme displays a DNA polymerase activity that can copy either DNA or RNA templates, and a ribonuclease H (RNase H) activity that cleaves the RNA strand of RNA-DNA heteroduplexes in a partially processive 3' to 5' endonucleasic mode. Conversion of viral genomic RNA into dsDNA requires many steps. A tRNA(3)-Lys binds to the primer-binding site (PBS) situated at the 5'-end of the viral RNA. RT uses the 3' end of the tRNA primer to perform a short round of RNA-dependent minus-strand DNA synthesis. The reading proceeds through the U5 region and ends after the repeated (R) region which is present at both ends of viral RNA. The portion of the RNA-DNA heteroduplex is digested by the RNase H, resulting in a ssDNA product attached to the tRNA primer. This ssDNA/tRNA hybridizes with the identical R region situated at the 3' end of viral RNA. This template exchange, known as minus-strand DNA strong stop transfer, can be either intra- or intermolecular. RT uses the 3' end of this newly synthesized short ssDNA to perform the RNA-dependent minus-strand DNA synthesis of the whole template. RNase H digests the RNA template except for two polypurine tracts (PPTs) situated at the 5'-end and near the center of the genome. It is not clear if both polymerase and RNase H activities are simultaneous. RNase H probably can proceed both in a polymerase-dependent (RNA cut into small fragments by the same RT performing DNA synthesis) and a polymerase-independent mode (cleavage of remaining RNA fragments by free RTs). Secondly, RT performs DNA-directed plus-strand DNA synthesis using the PPTs that have not been removed by RNase H as primers. PPTs and tRNA primers are then removed by RNase H. The 3' and 5' ssDNA PBS regions hybridize to form a circular dsDNA intermediate. Strand displacement synthesis by RT to the PBS and PPT ends produces a blunt ended, linear dsDNA copy of the viral genome that includes long terminal repeats (LTRs) at both ends. Functionally, catalyzes viral DNA integration into the host chromosome, by performing a series of DNA cutting and joining reactions. This enzyme activity takes place after virion entry into a cell and reverse transcription of the RNA genome in dsDNA. The first step in the integration process is 3' processing. This step requires a complex comprising the viral genome, matrix protein, Vpr and integrase. This complex is called the pre-integration complex (PIC). The integrase protein removes 2 nucleotides from each 3' end of the viral DNA, leaving recessed CA OH's at the 3' ends. In the second step, the PIC enters cell nucleus. This process is mediated through integrase and Vpr proteins, and allows the virus to infect a non dividing cell. This ability to enter the nucleus is specific of lentiviruses, other retroviruses cannot and rely on cell division to access cell chromosomes. In the third step, termed strand transfer, the integrase protein joins the previously processed 3' ends to the 5' ends of strands of target cellular DNA at the site of integration. The 5'-ends are produced by integrase-catalyzed staggered cuts, 5 bp apart. A Y-shaped, gapped, recombination intermediate results, with the 5'-ends of the viral DNA strands and the 3' ends of target DNA strands remaining unjoined, flanking a gap of 5 bp. The last step is viral DNA integration into host chromosome. This involves host DNA repair synthesis in which the 5 bp gaps between the unjoined strands are filled in and then ligated. Since this process occurs at both cuts flanking the HIV genome, a 5 bp duplication of host DNA is produced at the ends of HIV-1 integration. Alternatively, Integrase may catalyze the excision of viral DNA just after strand transfer, this is termed disintegration. The chain is Gag-Pol polyprotein (gag-pol) from Human immunodeficiency virus type 2 subtype B (isolate EHO) (HIV-2).